Here is a 142-residue protein sequence, read N- to C-terminus: Large ribosomal subunit protein uL11 (142 aa).

Belongs to the universal ribosomal protein uL11 family. As to quaternary structure, part of the ribosomal stalk of the 50S ribosomal subunit. Interacts with L10 and the large rRNA to form the base of the stalk. L10 forms an elongated spine to which L12 dimers bind in a sequential fashion forming a multimeric L10(L12)X complex. In terms of processing, one or more lysine residues are methylated.

Its function is as follows. Forms part of the ribosomal stalk which helps the ribosome interact with GTP-bound translation factors. The sequence is that of Large ribosomal subunit protein uL11 from Desulfitobacterium hafniense (strain DSM 10664 / DCB-2).